The following is a 372-amino-acid chain: tRNA 2-selenouridine synthase (372 aa).

The Rhodanese domain maps to 19–142 (LASGHPIMDV…MRQYLIDTID (124 aa)). Cys-102 (S-selanylcysteine intermediate) is an active-site residue.

This sequence belongs to the SelU family. Monomer.

It carries out the reaction 5-methylaminomethyl-2-thiouridine(34) in tRNA + selenophosphate + (2E)-geranyl diphosphate + H2O + H(+) = 5-methylaminomethyl-2-selenouridine(34) in tRNA + (2E)-thiogeraniol + phosphate + diphosphate. It catalyses the reaction 5-methylaminomethyl-2-thiouridine(34) in tRNA + (2E)-geranyl diphosphate = 5-methylaminomethyl-S-(2E)-geranyl-thiouridine(34) in tRNA + diphosphate. The catalysed reaction is 5-methylaminomethyl-S-(2E)-geranyl-thiouridine(34) in tRNA + selenophosphate + H(+) = 5-methylaminomethyl-2-(Se-phospho)selenouridine(34) in tRNA + (2E)-thiogeraniol. The enzyme catalyses 5-methylaminomethyl-2-(Se-phospho)selenouridine(34) in tRNA + H2O = 5-methylaminomethyl-2-selenouridine(34) in tRNA + phosphate. Functionally, involved in the post-transcriptional modification of the uridine at the wobble position (U34) of tRNA(Lys), tRNA(Glu) and tRNA(Gln). Catalyzes the conversion of 2-thiouridine (S2U-RNA) to 2-selenouridine (Se2U-RNA). Acts in a two-step process involving geranylation of 2-thiouridine (S2U) to S-geranyl-2-thiouridine (geS2U) and subsequent selenation of the latter derivative to 2-selenouridine (Se2U) in the tRNA chain. This Shewanella loihica (strain ATCC BAA-1088 / PV-4) protein is tRNA 2-selenouridine synthase.